The primary structure comprises 1945 residues: Rho GTPase-activating protein 21 (1945 aa).

Positions 26–53 (CEVSKNKDGKDQGEPVSPSEDEPFSWPG) are disordered. Residues 29–38 (SKNKDGKDQG) are compositionally biased toward basic and acidic residues. Ser-42 and Ser-63 each carry phosphoserine. A PDZ domain is found at 56–165 (TVMLKRTSQG…TLELSVMPKD (110 aa)). Disordered regions lie at residues 210–229 (TAQP…QQTS) and 326–365 (HQTT…DSPP). The segment covering 347 to 358 (SGHSEGISSSRS) has biased composition (low complexity). Ser-454 carries the post-translational modification Phosphoserine. Over residues 499–512 (EATATVNSESQIPD) the composition is skewed to polar residues. The interval 499–519 (EATATVNSESQIPDSNGERKQ) is disordered. An omega-N-methylarginine mark is found at Arg-549 and Arg-569. Disordered regions lie at residues 573 to 647 (PVSQ…RPVN) and 674 to 702 (EVSS…LELP). The segment covering 589-600 (SNRNFPTTTGVS) has biased composition (polar residues). 2 positions are modified to phosphoserine: Ser-610 and Ser-619. Polar residues predominate over residues 674 to 696 (EVSSCLPGTSAKTSPQLSENLGT). Thr-741 bears the Phosphothreonine mark. Phosphoserine is present on residues Ser-851, Ser-856, and Ser-875. Disordered regions lie at residues 852 to 879 (HDQE…YDEG) and 902 to 921 (ITDS…SSSE). Residues 866–879 (HSSKTERSKSYDEG) show a composition bias toward basic and acidic residues. Residue Tyr-876 is modified to Phosphotyrosine. 5 positions are modified to phosphoserine: Ser-918, Ser-920, Ser-948, Ser-1093, and Ser-1109. The tract at residues 924 to 1091 (SDAAREGWLQ…AKSEPKTQSP (168 aa)) is interaction with ARF1 and ARF6. The PH domain occupies 925–1034 (DAAREGWLQF…WIKTIQESSN (110 aa)). The disordered stretch occupies residues 1080-1120 (LGAKSEPKTQSPHSPKEESERKLLSKDDTSPPKDKGTWRRG). Positions 1093–1116 (SPKEESERKLLSKDDTSPPKDKGT) are enriched in basic and acidic residues. Positions 1141 to 1333 (VRLDDCPPAH…TLIQHHDWFF (193 aa)) constitute a Rho-GAP domain. Disordered stretches follow at residues 1373–1396 (PGDV…SGKD), 1412–1632 (SRKR…PVFP), 1649–1794 (ARVS…LGGH), and 1846–1945 (RTSA…ETPP). Residues 1377–1395 (SDSATSDSAKSKGSWGSGK) are compositionally biased toward low complexity. A phosphoserine mark is found at Ser-1412, Ser-1426, and Ser-1427. Composition is skewed to basic and acidic residues over residues 1435 to 1457 (FFKK…RESE) and 1471 to 1488 (SNTK…KIPW). Residue Lys-1438 forms a Glycyl lysine isopeptide (Lys-Gly) (interchain with G-Cter in SUMO) linkage. Thr-1504 bears the Phosphothreonine mark. Low complexity-rich tracts occupy residues 1531-1556 (SDSG…STSP) and 1569-1589 (TTTS…LDSS). The segment at 1579-1848 (STTYLTSLDS…WLARERVRTS (270 aa)) is interaction with CTNNA1. A compositionally biased stretch (polar residues) spans 1590–1599 (RLSPEVQSVA). Positions 1611–1621 (SELVSEGRPVE) are enriched in basic and acidic residues. The residue at position 1656 (Ser-1656) is a Phosphoserine. Polar residues-rich tracts occupy residues 1658-1681 (GSEA…QFSS) and 1729-1738 (STGSLLTPSR). Thr-1669 carries the post-translational modification Phosphothreonine. Residue Ser-1729 is modified to Phosphoserine. The span at 1739–1757 (SESEKQEATWKTKIADRLK) shows a compositional bias: basic and acidic residues. Basic residues predominate over residues 1782-1792 (RKNIKRRHTLG). Residues 1871–1882 (PISTHSPPSQQP) show a composition bias toward polar residues. The span at 1887 to 1896 (AATSTLASTS) shows a compositional bias: low complexity. A Phosphothreonine modification is found at Thr-1902. A Phosphoserine modification is found at Ser-1906. Positions 1907–1927 (PDQINRESFQNMSQNASSTAN) are enriched in polar residues. Residues 1932–1945 (KQSESPDTKAETPP) show a composition bias toward basic and acidic residues.

As to quaternary structure, interacts with CTNNA1. Interacts with GTP-bound ARF1 and probably ARF6. In terms of processing, sumoylated with SUMO2 and SUMO3 in proliferating lymphocytes.

It localises to the golgi apparatus membrane. The protein localises to the cell junction. The protein resides in the cytoplasmic vesicle membrane. Its subcellular location is the cytoplasm. It is found in the cytoskeleton. Functions as a GTPase-activating protein (GAP) for RHOA and CDC42. Downstream partner of ARF1 which may control Golgi apparatus structure and function. Also required for CTNNA1 recruitment to adherens junctions. The chain is Rho GTPase-activating protein 21 from Mus musculus (Mouse).